Reading from the N-terminus, the 373-residue chain is Autophagy-related protein 18 (373 aa).

Residues Y142–N163 form a disordered region. Positions D144 to G154 are enriched in basic and acidic residues. WD repeat units lie at residues D144–K183, A186–Q226, and S231–E270. The short motif at F227–S231 is the L/FRRG motif element.

Belongs to the WD repeat PROPPIN family. Component of the PI(3,5)P2 regulatory complex. Interacts with atg5.

The protein localises to the preautophagosomal structure membrane. Its subcellular location is the vacuole membrane. The protein resides in the endosome membrane. Functionally, the PI(3,5)P2 regulatory complex regulates both the synthesis and turnover of phosphatidylinositol 3,5-bisphosphate (PtdIns(3,5)P2). Necessary for proper vacuole morphology. Plays an important role in osmotically-induced vacuole fragmentation. Required for cytoplasm to vacuole transport (Cvt) vesicle formation, pexophagy and starvation-induced autophagy. Involved in correct atg9 trafficking to the preautophagosomal structure. Might also be involved in premeiotic DNA replication. Required for the recruitment of the atg5-atg12/atg16 complex to the preautophagosomal structure. The chain is Autophagy-related protein 18 (atg18) from Schizosaccharomyces pombe (strain 972 / ATCC 24843) (Fission yeast).